Reading from the N-terminus, the 254-residue chain is Pimeloyl-[acyl-carrier protein] methyl ester esterase (254 aa).

The 225-residue stretch at 14–238 (VVMLHGWGLH…QASHAPFLSH (225 aa)) folds into the AB hydrolase-1 domain. Substrate is bound by residues Trp-20, 80–81 (SL), and 142–146 (FLALQ). Ser-80 (nucleophile) is an active-site residue. Catalysis depends on residues Asp-204 and His-232. His-232 provides a ligand contact to substrate.

This sequence belongs to the AB hydrolase superfamily. Carboxylesterase BioH family. In terms of assembly, monomer.

The protein resides in the cytoplasm. It carries out the reaction 6-carboxyhexanoyl-[ACP] methyl ester + H2O = 6-carboxyhexanoyl-[ACP] + methanol + H(+). It functions in the pathway cofactor biosynthesis; biotin biosynthesis. Functionally, the physiological role of BioH is to remove the methyl group introduced by BioC when the pimeloyl moiety is complete. It allows to synthesize pimeloyl-ACP via the fatty acid synthetic pathway through the hydrolysis of the ester bonds of pimeloyl-ACP esters. The chain is Pimeloyl-[acyl-carrier protein] methyl ester esterase from Chromobacterium violaceum (strain ATCC 12472 / DSM 30191 / JCM 1249 / CCUG 213 / NBRC 12614 / NCIMB 9131 / NCTC 9757 / MK).